The primary structure comprises 178 residues: NADH-quinone oxidoreductase subunit B (178 aa).

Residues C45, C46, C111, and C140 each coordinate [4Fe-4S] cluster.

Belongs to the complex I 20 kDa subunit family. In terms of assembly, NDH-1 is composed of 15 different subunits. Subunits NuoB, C, D, E, F, and G constitute the peripheral sector of the complex. The cofactor is [4Fe-4S] cluster.

Its subcellular location is the cell membrane. It catalyses the reaction a quinone + NADH + 5 H(+)(in) = a quinol + NAD(+) + 4 H(+)(out). NDH-1 shuttles electrons from NADH, via FMN and iron-sulfur (Fe-S) centers, to quinones in the respiratory chain. The immediate electron acceptor for the enzyme in this species is believed to be a menaquinone. Couples the redox reaction to proton translocation (for every two electrons transferred, four hydrogen ions are translocated across the cytoplasmic membrane), and thus conserves the redox energy in a proton gradient. This Deinococcus geothermalis (strain DSM 11300 / CIP 105573 / AG-3a) protein is NADH-quinone oxidoreductase subunit B.